The chain runs to 446 residues: Inward rectifier potassium channel 4 (446 aa).

At 1 to 55 (MHGHSRNGQAHVPRRKRRNRFVKKNGQCNVYFANLSNKSQRYMADIFTTCVDTRW) the chain is on the cytoplasmic side. A helical membrane pass occupies residues 56–80 (RYMLMIFSAAFLVSWLFFGLLFWCI). Residues 81–120 (AFFHGDLEPSPSGPTAGGPGGNGGGAAPTAAKPCIMHVNG) lie on the Extracellular side of the membrane. The interval 91-111 (PSGPTAGGPGGNGGGAAPTAA) is val/Gly/Ala/Pro stretch. Residues 121-132 (FLGAFLFSVETQ) constitute an intramembrane region (helical; Pore-forming). Residues 133–139 (TTIGYGF) constitute an intramembrane region (pore-forming). Positions 134 to 139 (TIGYGF) match the Selectivity filter motif. The Extracellular portion of the chain corresponds to 140 to 148 (RCVTEECPL). The helical transmembrane segment at 149–170 (AVIAVVVQSIVGCVIDSFMIGT) threads the bilayer. Topologically, residues 171-446 (IMAKMPRPKK…NISYRRESAI (276 aa)) are cytoplasmic. A PDZ-binding motif is present at residues 444–446 (SAI).

Belongs to the inward rectifier-type potassium channel (TC 1.A.2.1) family. KCNJ4 subfamily. In terms of assembly, homomultimeric and heteromultimeric association with KCNJ2 and KCNJ12. Interacts with DLG2 and DLG4. Associates, via its PDZ-recognition domain, with a complex containing LIN7A, LIN7B, LIN7C, DLG1, CASK and APBA1. Interacts with TAX1BP3. TAX1BP3 competes with LIN7 family members for KCNJ4 binding. In terms of tissue distribution, detected in kidney distal convoluted tubules (at protein level). Widely expressed throughout the brain. Also found in some peripheral tissues.

Its subcellular location is the cell membrane. The protein localises to the cytoplasmic vesicle membrane. The protein resides in the postsynaptic cell membrane. It carries out the reaction K(+)(in) = K(+)(out). Its function is as follows. Inward rectifier potassium channels are characterized by a greater tendency to allow potassium to flow into the cell rather than out of it. Their voltage dependence is regulated by the concentration of extracellular potassium; as external potassium is raised, the voltage range of the channel opening shifts to more positive voltages. The inward rectification is mainly due to the blockage of outward current by internal magnesium. Can be blocked by extracellular barium and cesium. This Rattus norvegicus (Rat) protein is Inward rectifier potassium channel 4 (Kcnj4).